We begin with the raw amino-acid sequence, 2059 residues long: DNA polymerase theta (2059 aa).

The segment at 25–45 (DKENAQPGNGNIQVQSAGNEV) is disordered. Over residues 30–45 (QPGNGNIQVQSAGNEV) the composition is skewed to polar residues. The 174-residue stretch at 243–416 (PRLLFEHCNL…WLDAELYITN (174 aa)) folds into the Helicase ATP-binding domain. Position 256-263 (256-263 (APTSAGKT)) interacts with ATP. Positions 357–360 (DEVH) match the DEAH box motif. The Helicase C-terminal domain occupies 464-666 (CIETLLEGCS…HLKRALLEVI (203 aa)). Disordered stretches follow at residues 1052–1073 (PPVKRKLSIEENGTANSQKNPR), 1168–1190 (PQLANEEKPSTSQSARRKLVNEG), 1204–1274 (QRTQ…SRKV), and 1330–1372 (PHAS…GVSS). The segment covering 1062 to 1071 (ENGTANSQKN) has biased composition (polar residues). The segment covering 1213–1274 (KDQPIQASRS…NANRTASRKV (62 aa)) has biased composition (polar residues). A compositionally biased stretch (basic and acidic residues) spans 1355-1365 (REIEIDLESKN).

The protein belongs to the DNA polymerase type-A family. Mg(2+) is required as a cofactor. In terms of processing, in adult males, cleaved to produce a 100 kDa form. Expressed in ovaries (at protein level).

Its subcellular location is the nucleus. It catalyses the reaction DNA(n) + a 2'-deoxyribonucleoside 5'-triphosphate = DNA(n+1) + diphosphate. Its activity is regulated as follows. Resistant to aphidicolin, but sensitive to dideoxythymindine triphosphate (ddTTP) and N-ethyl malemide (NEM). Functionally, multifunctional protein with both DNA polymerase and ATPase activities. Might have 3' to 5' exonuclease activity. Plays a role in different DNA repair pathways such as DNA strand cross-link repair and microhomology-mediated end-joining (MMEJ), an alternative non-homologous end-joining (NHEJ) machinery triggered in response to double-strand breaks. MMEJ is an error-prone repair pathway that produces deletions of sequences from the strand being repaired and promotes genomic rearrangements, such as telomere fusions. Utilizes short microhomologies present in partially and fully single-stranded DNA (ssDNA) as primers for DNA synthesis. Prefers poly(dA)/oligo(dT) as a template-primer. The ATPase activity is necessary during interstrand cross-link (ICL) repair and has a critical role in generating templated insertions during MMEJ. Necessary for processing DNA damage induced by oxygen and N-ethylation. In follicle cells, contributes to double-strand break repair at physiological rereplication forks necessary for survival of fertilized eggs. This chain is DNA polymerase theta, found in Drosophila melanogaster (Fruit fly).